The chain runs to 177 residues: Ribosome maturation factor RimM (177 aa).

The 73-residue stretch at 104–176 folds into the PRC barrel domain; the sequence is DGEYYFFEIL…KIIVNMPEWL (73 aa).

The protein belongs to the RimM family. Binds ribosomal protein uS19.

Its subcellular location is the cytoplasm. Its function is as follows. An accessory protein needed during the final step in the assembly of 30S ribosomal subunit, possibly for assembly of the head region. Essential for efficient processing of 16S rRNA. May be needed both before and after RbfA during the maturation of 16S rRNA. It has affinity for free ribosomal 30S subunits but not for 70S ribosomes. The chain is Ribosome maturation factor RimM from Fervidobacterium nodosum (strain ATCC 35602 / DSM 5306 / Rt17-B1).